The sequence spans 118 residues: Large ribosomal subunit protein bL19 (118 aa).

It belongs to the bacterial ribosomal protein bL19 family.

In terms of biological role, this protein is located at the 30S-50S ribosomal subunit interface and may play a role in the structure and function of the aminoacyl-tRNA binding site. The sequence is that of Large ribosomal subunit protein bL19 from Salinispora arenicola (strain CNS-205).